The sequence spans 147 residues: Hemoglobin subunit beta-1 (147 aa).

In terms of domain architecture, Globin spans 3–147 (EWTDKERSII…VVSALGKQYH (145 aa)). Heme b is bound by residues His-64 and His-93.

The protein belongs to the globin family. Heterotetramer of two alpha chains and two beta chains. Red blood cells.

Involved in oxygen transport from gills to the various peripheral tissues. The sequence is that of Hemoglobin subunit beta-1 (hbb1) from Pagothenia borchgrevinki (Bald rockcod).